Consider the following 311-residue polypeptide: uncharacterized protein (311 aa).

10 helical membrane passes run 6 to 26 (IFIL…KMLA), 33 to 53 (PFQV…PMAV), 70 to 90 (YLAL…QFAV), 97 to 117 (TAAV…YFIL), 123 to 143 (GITI…FNPA), 155 to 175 (LIGI…TVIS), 185 to 205 (YVFN…LLVV), 219 to 239 (ILVL…CYLG), 244 to 264 (TSAV…TVLA), and 265 to 285 (ILIL…FIII). EamA domains are found at residues 12–141 (AIFY…IIFN) and 166–292 (VVWS…INYS).

It belongs to the EamA transporter family.

The protein resides in the cell membrane. This is an uncharacterized protein from Clostridium kluyveri (strain ATCC 8527 / DSM 555 / NBRC 12016 / NCIMB 10680 / K1).